Reading from the N-terminus, the 671-residue chain is UvrABC system protein B (671 aa).

The Helicase ATP-binding domain maps to 31–414 (DGFEQGEKAQ…ELNQTDHKVE (384 aa)). 44-51 (GATGTGKT) is an ATP binding site. The Beta-hairpin motif lies at 97–120 (YYDYYQPEAYVPQSDTYIEKDSSI). The 167-residue stretch at 435-601 (QIDDLVGEVN…TIVKPIRDVI (167 aa)) folds into the Helicase C-terminal domain. In terms of domain architecture, UVR spans 630-665 (QNMIKTLTAQMQEAAKKLDFEEAANLRDAIMDLKKQ).

Belongs to the UvrB family. As to quaternary structure, forms a heterotetramer with UvrA during the search for lesions. Interacts with UvrC in an incision complex.

It is found in the cytoplasm. Its function is as follows. The UvrABC repair system catalyzes the recognition and processing of DNA lesions. A damage recognition complex composed of 2 UvrA and 2 UvrB subunits scans DNA for abnormalities. Upon binding of the UvrA(2)B(2) complex to a putative damaged site, the DNA wraps around one UvrB monomer. DNA wrap is dependent on ATP binding by UvrB and probably causes local melting of the DNA helix, facilitating insertion of UvrB beta-hairpin between the DNA strands. Then UvrB probes one DNA strand for the presence of a lesion. If a lesion is found the UvrA subunits dissociate and the UvrB-DNA preincision complex is formed. This complex is subsequently bound by UvrC and the second UvrB is released. If no lesion is found, the DNA wraps around the other UvrB subunit that will check the other stand for damage. The sequence is that of UvrABC system protein B from Lactobacillus johnsonii (strain CNCM I-12250 / La1 / NCC 533).